Reading from the N-terminus, the 394-residue chain is Saposin-like protein 11 (394 aa).

A signal peptide spans 1–18; sequence MSVFRFLLFLSLLVGSNA. 2 N-linked (GlcNAc...) asparagine glycosylation sites follow: asparagine 25 and asparagine 272. The Saposin B-type domain occupies 306-394; sequence GNMVCDICEK…SFCKHVPFCK (89 aa). Intrachain disulfides connect cysteine 310–cysteine 393, cysteine 313–cysteine 387, and cysteine 343–cysteine 359.

The protein is Saposin-like protein 11 (spp-11) of Caenorhabditis elegans.